A 227-amino-acid chain; its full sequence is Cytochrome c oxidase subunit 2 (227 aa).

Residues 1–22 lie on the Mitochondrial intermembrane side of the membrane; it reads MAYPFQLGLQDATSPIMEELMN. A helical membrane pass occupies residues 23 to 44; that stretch reads FHDHTLMIVFLISSLVLYIISL. The Mitochondrial matrix portion of the chain corresponds to 45 to 60; the sequence is MLTTKLTHTSTMDAQE. Residues 61–81 traverse the membrane as a helical segment; sequence VETIWTILPAVILIMIALPSL. Over 82-227 the chain is Mitochondrial intermembrane; that stretch reads RILYMMDEIN…YFENWSASMI (146 aa). Residues H161, C196, E198, C200, H204, and M207 each contribute to the Cu cation site. Mg(2+) is bound at residue E198. At Y218 the chain carries Phosphotyrosine.

The protein belongs to the cytochrome c oxidase subunit 2 family. As to quaternary structure, component of the cytochrome c oxidase (complex IV, CIV), a multisubunit enzyme composed of 14 subunits. The complex is composed of a catalytic core of 3 subunits MT-CO1, MT-CO2 and MT-CO3, encoded in the mitochondrial DNA, and 11 supernumerary subunits COX4I, COX5A, COX5B, COX6A, COX6B, COX6C, COX7A, COX7B, COX7C, COX8 and NDUFA4, which are encoded in the nuclear genome. The complex exists as a monomer or a dimer and forms supercomplexes (SCs) in the inner mitochondrial membrane with NADH-ubiquinone oxidoreductase (complex I, CI) and ubiquinol-cytochrome c oxidoreductase (cytochrome b-c1 complex, complex III, CIII), resulting in different assemblies (supercomplex SCI(1)III(2)IV(1) and megacomplex MCI(2)III(2)IV(2)). Found in a complex with TMEM177, COA6, COX18, COX20, SCO1 and SCO2. Interacts with TMEM177 in a COX20-dependent manner. Interacts with COX20. Interacts with COX16. The cofactor is Cu cation.

It is found in the mitochondrion inner membrane. It catalyses the reaction 4 Fe(II)-[cytochrome c] + O2 + 8 H(+)(in) = 4 Fe(III)-[cytochrome c] + 2 H2O + 4 H(+)(out). In terms of biological role, component of the cytochrome c oxidase, the last enzyme in the mitochondrial electron transport chain which drives oxidative phosphorylation. The respiratory chain contains 3 multisubunit complexes succinate dehydrogenase (complex II, CII), ubiquinol-cytochrome c oxidoreductase (cytochrome b-c1 complex, complex III, CIII) and cytochrome c oxidase (complex IV, CIV), that cooperate to transfer electrons derived from NADH and succinate to molecular oxygen, creating an electrochemical gradient over the inner membrane that drives transmembrane transport and the ATP synthase. Cytochrome c oxidase is the component of the respiratory chain that catalyzes the reduction of oxygen to water. Electrons originating from reduced cytochrome c in the intermembrane space (IMS) are transferred via the dinuclear copper A center (CU(A)) of subunit 2 and heme A of subunit 1 to the active site in subunit 1, a binuclear center (BNC) formed by heme A3 and copper B (CU(B)). The BNC reduces molecular oxygen to 2 water molecules using 4 electrons from cytochrome c in the IMS and 4 protons from the mitochondrial matrix. This chain is Cytochrome c oxidase subunit 2 (Mtco2), found in Mus musculus (Mouse).